We begin with the raw amino-acid sequence, 463 residues long: MPGKIGKVVQVIGPVVDIKFDSDSLPNLYNAISIDMGERTLIAEVEQHVGDDIVRTIAMEATEGLKRGMDAVDTEKAISVPVGDKVLGRLFNVLGKPIDNAGEVEAEEIYPIHRPAPSFKDQAVEPEMFETGIKVIDLLAPYQRGGKIGLFGGAGVGKTVLIQELINNIAKEHGGLSVFTGVGERSREGNDLYHEMRESGVIDKTALVFGQMNEPPGARMRVALTGLTMAEYFRDKGQDVLLFIDNIFRFTQAGSEVSALLGRIPSAVGYQPTLATEMGALQERITSTKNGSITSVQAVYVPADDLTDPAPATTFSHLDATTVLSRSIVELGIYPAVDPLESSSRILDPRLVGEEHYNVATKVKNILERYKELQDIIAILGVDELSDEDKAVVSRARKVQRFLSQPFTVGEQFTGMPGKYVSVKETIKGFKEILEGKYDDLPESAFLFIGSVEEAVQKAKSLA.

ATP is bound at residue 152–159; the sequence is GGAGVGKT.

The protein belongs to the ATPase alpha/beta chains family. As to quaternary structure, F-type ATPases have 2 components, CF(1) - the catalytic core - and CF(0) - the membrane proton channel. CF(1) has five subunits: alpha(3), beta(3), gamma(1), delta(1), epsilon(1). CF(0) has three main subunits: a(1), b(2) and c(9-12). The alpha and beta chains form an alternating ring which encloses part of the gamma chain. CF(1) is attached to CF(0) by a central stalk formed by the gamma and epsilon chains, while a peripheral stalk is formed by the delta and b chains.

The protein localises to the cell membrane. The catalysed reaction is ATP + H2O + 4 H(+)(in) = ADP + phosphate + 5 H(+)(out). In terms of biological role, produces ATP from ADP in the presence of a proton gradient across the membrane. The catalytic sites are hosted primarily by the beta subunits. In Clostridium botulinum (strain Alaska E43 / Type E3), this protein is ATP synthase subunit beta.